We begin with the raw amino-acid sequence, 318 residues long: MPREDRATWKSNYFLKIIQLLDDYPKCFIVGADNVGSKQMQQIRMSLRGKAVVLMGKNTMMRKAIRGHLENNPALEKLLPHIRGNVGFVFTKEDLTEIRDMLLANKVPAAARAGAIAPCEVTVPAQNTGLGPEKTSFFQALGITTKISRGTIEILSDVQLIKTGDKVGASEATLLNMLNISPFSFGLIIQQVFDNGSIYNPEVLDITEDTLHSRFLEGVRNVASVCLQIGYPTVASVPHSIINGYKRVLALSVETEYTFPLAEKVKAFLADPSAFVAAAPVAAASTAAPAAAAAAPAKVEAKEESEESDEDMGFGLFD.

Position 24 is a phosphotyrosine (Tyr-24). At Thr-59 the chain carries Phosphothreonine. Residue Lys-264 forms a Glycyl lysine isopeptide (Lys-Gly) (interchain with G-Cter in ubiquitin) linkage. Lys-298 is covalently cross-linked (Glycyl lysine isopeptide (Lys-Gly) (interchain with G-Cter in SUMO1); alternate). Lys-298 is covalently cross-linked (Glycyl lysine isopeptide (Lys-Gly) (interchain with G-Cter in SUMO2); alternate). Residues 298 to 318 are disordered; the sequence is KVEAKEESEESDEDMGFGLFD. Residues 303-312 show a composition bias toward acidic residues; the sequence is EESEESDEDM. Ser-305 and Ser-308 each carry phosphoserine.

The protein belongs to the universal ribosomal protein uL10 family. In terms of assembly, P0 forms a pentameric complex by interaction with dimers of P1 and P2. Identified in a IGF2BP1-dependent mRNP granule complex containing untranslated mRNAs. Interacts with APEX1. Interacts with FMR1 isoform 6. Post-translationally, ubiquitinated at Lys-264 by RNF14 and RNF25 in response to ribosome collisions (ribosome stalling).

It localises to the nucleus. The protein resides in the cytoplasm. Its function is as follows. Ribosomal protein P0 is the functional equivalent of E.coli protein L10. The sequence is that of Large ribosomal subunit protein uL10 (RPLP0) from Oryctolagus cuniculus (Rabbit).